Reading from the N-terminus, the 440-residue chain is Polyprenol-phosphate-mannose-dependent alpha-(1-2)-phosphatidylinositol mannoside mannosyltransferase (440 aa).

Helical transmembrane passes span 15–35 (LAPT…VLWV), 87–107 (LAAI…SSAI), 109–129 (ATTL…LDVW), 144–161 (AWLA…LEPI), 164–184 (NFEF…DCVP), 193–213 (LLLG…LYFL), 224–244 (TAAT…SDSV), 281–301 (PRFI…VWAA), 316–336 (APVL…PVSW), 360–380 (VWFT…PITL), and 395–415 (LAGG…GLVS). Positions 419 to 440 (THTGDAHETDEPLVPLARGEAG) are disordered.

The protein belongs to the glycosyltransferase 87 family.

The protein localises to the cell membrane. It participates in phospholipid metabolism; phosphatidylinositol metabolism. Responsible for the addition of alpha-(1-2) mannose branches to the linear mannan core on the biosynthetic pathway to mature Lipoarabinomannan (LAM). The protein is Polyprenol-phosphate-mannose-dependent alpha-(1-2)-phosphatidylinositol mannoside mannosyltransferase of Mycolicibacterium smegmatis (strain ATCC 700084 / mc(2)155) (Mycobacterium smegmatis).